We begin with the raw amino-acid sequence, 427 residues long: Serine--tRNA ligase (427 aa).

Position 231–233 (231–233 (TAE)) interacts with L-serine. 262–264 (RSE) is a binding site for ATP. Glutamate 285 is an L-serine binding site. 349-352 (EISS) contacts ATP. Residue serine 385 participates in L-serine binding.

The protein belongs to the class-II aminoacyl-tRNA synthetase family. Type-1 seryl-tRNA synthetase subfamily. As to quaternary structure, homodimer. The tRNA molecule binds across the dimer.

It is found in the cytoplasm. The enzyme catalyses tRNA(Ser) + L-serine + ATP = L-seryl-tRNA(Ser) + AMP + diphosphate + H(+). It catalyses the reaction tRNA(Sec) + L-serine + ATP = L-seryl-tRNA(Sec) + AMP + diphosphate + H(+). The protein operates within aminoacyl-tRNA biosynthesis; selenocysteinyl-tRNA(Sec) biosynthesis; L-seryl-tRNA(Sec) from L-serine and tRNA(Sec): step 1/1. Catalyzes the attachment of serine to tRNA(Ser). Is also able to aminoacylate tRNA(Sec) with serine, to form the misacylated tRNA L-seryl-tRNA(Sec), which will be further converted into selenocysteinyl-tRNA(Sec). This Hahella chejuensis (strain KCTC 2396) protein is Serine--tRNA ligase.